Reading from the N-terminus, the 181-residue chain is uncharacterized protein (181 aa).

Belongs to the M.jannaschii MJ0150/MJ0739/MJ0745/MJ1460/MJ1642 family.

This is an uncharacterized protein from Methanocaldococcus jannaschii (strain ATCC 43067 / DSM 2661 / JAL-1 / JCM 10045 / NBRC 100440) (Methanococcus jannaschii).